Reading from the N-terminus, the 328-residue chain is Nucleotide-binding protein BLD_0430 (328 aa).

The segment at 1 to 35 (MNQQTTNRDTGEAAATNAPANSATSTSTPDNQPTP) is disordered. Over residues 13–29 (AAATNAPANSATSTSTP) the composition is skewed to low complexity. 46–53 (GMSGAGRS) lines the ATP pocket. Residue 101–104 (DVRS) participates in GTP binding.

It belongs to the RapZ-like family.

Displays ATPase and GTPase activities. The sequence is that of Nucleotide-binding protein BLD_0430 from Bifidobacterium longum (strain DJO10A).